Reading from the N-terminus, the 115-residue chain is Delta-hexatoxin-Hi1a (115 aa).

An N-terminal signal peptide occupies residues 1–18 (MKVIATLYGLLFLTVVLG). Residues 19 to 73 (DITEGNENDLVENFREELSEADIPLLKKLEAIEDALLEKDFLPYEEEDRNARPKR) constitute a propeptide that is removed on maturation. Intrachain disulfides connect C74–C88, C81–C93, C87–C104, and C89–C115.

Belongs to the neurotoxin 06 (delta-actx) family. In terms of tissue distribution, expressed by the venom gland.

Its subcellular location is the secreted. Functionally, neurotoxin that slows inactivation of voltage-gated sodium channels (Nav). In vivo, is lethal to both vertebrates and insects. The polypeptide is Delta-hexatoxin-Hi1a (Hadronyche infensa (Fraser island funnel-web spider)).